Here is a 712-residue protein sequence, read N- to C-terminus: Polyribonucleotide nucleotidyltransferase (712 aa).

Positions 484 and 490 each coordinate Mg(2+). Positions 551–610 (PKVFTIQIHPDKIRDIIGPGGKVIRAIQAETGTRVDVDDSGLVKVSAVNLEEGEAALQMI) constitute a KH domain. The region spanning 620–688 (GAVYEGTVVK…KDGKIRLSRK (69 aa)) is the S1 motif domain. The segment at 689–712 (ALLEEENGKSGPENGAPQRDKNRH) is disordered.

The protein belongs to the polyribonucleotide nucleotidyltransferase family. Mg(2+) is required as a cofactor.

It localises to the cytoplasm. The enzyme catalyses RNA(n+1) + phosphate = RNA(n) + a ribonucleoside 5'-diphosphate. Functionally, involved in mRNA degradation. Catalyzes the phosphorolysis of single-stranded polyribonucleotides processively in the 3'- to 5'-direction. The chain is Polyribonucleotide nucleotidyltransferase from Desulfatibacillum aliphaticivorans.